Reading from the N-terminus, the 442-residue chain is Proline--tRNA ligase (442 aa).

The protein belongs to the class-II aminoacyl-tRNA synthetase family. ProS type 2 subfamily. In terms of assembly, homodimer.

The protein resides in the cytoplasm. It carries out the reaction tRNA(Pro) + L-proline + ATP = L-prolyl-tRNA(Pro) + AMP + diphosphate. Its function is as follows. Catalyzes the attachment of proline to tRNA(Pro) in a two-step reaction: proline is first activated by ATP to form Pro-AMP and then transferred to the acceptor end of tRNA(Pro). This is Proline--tRNA ligase from Chelativorans sp. (strain BNC1).